The chain runs to 142 residues: Large ribosomal subunit protein uL11 (142 aa).

The protein belongs to the universal ribosomal protein uL11 family. Part of the ribosomal stalk of the 50S ribosomal subunit. Interacts with L10 and the large rRNA to form the base of the stalk. L10 forms an elongated spine to which L12 dimers bind in a sequential fashion forming a multimeric L10(L12)X complex. Post-translationally, one or more lysine residues are methylated.

Its function is as follows. Forms part of the ribosomal stalk which helps the ribosome interact with GTP-bound translation factors. The chain is Large ribosomal subunit protein uL11 from Bradyrhizobium sp. (strain ORS 278).